Here is a 410-residue protein sequence, read N- to C-terminus: Imidazolonepropionase (410 aa).

2 residues coordinate Fe(3+): His73 and His75. Zn(2+) is bound by residues His73 and His75. Positions 82, 145, and 178 each coordinate 4-imidazolone-5-propanoate. Tyr145 lines the N-formimidoyl-L-glutamate pocket. His243 is a binding site for Fe(3+). Position 243 (His243) interacts with Zn(2+). 4-imidazolone-5-propanoate is bound at residue Gln246. Position 318 (Asp318) interacts with Fe(3+). Residue Asp318 participates in Zn(2+) binding. The N-formimidoyl-L-glutamate site is built by Asn320 and Gly322. Ser323 provides a ligand contact to 4-imidazolone-5-propanoate.

Belongs to the metallo-dependent hydrolases superfamily. HutI family. It depends on Zn(2+) as a cofactor. The cofactor is Fe(3+).

Its subcellular location is the cytoplasm. It catalyses the reaction 4-imidazolone-5-propanoate + H2O = N-formimidoyl-L-glutamate. It participates in amino-acid degradation; L-histidine degradation into L-glutamate; N-formimidoyl-L-glutamate from L-histidine: step 3/3. Catalyzes the hydrolytic cleavage of the carbon-nitrogen bond in imidazolone-5-propanoate to yield N-formimidoyl-L-glutamate. It is the third step in the universal histidine degradation pathway. The sequence is that of Imidazolonepropionase from Shewanella frigidimarina (strain NCIMB 400).